An 85-amino-acid chain; its full sequence is Large ribosomal subunit protein bL27 (85 aa).

Residues 1–22 form a disordered region; that stretch reads MAHKKGGGSSRNGRDSNAQRRG.

This sequence belongs to the bacterial ribosomal protein bL27 family.

This is Large ribosomal subunit protein bL27 from Sorangium cellulosum (strain So ce56) (Polyangium cellulosum (strain So ce56)).